The sequence spans 579 residues: V-type ATP synthase alpha chain (579 aa).

ATP is bound at residue 227–234 (GGFGTGKT).

This sequence belongs to the ATPase alpha/beta chains family.

The catalysed reaction is ATP + H2O + 4 H(+)(in) = ADP + phosphate + 5 H(+)(out). In terms of biological role, produces ATP from ADP in the presence of a proton gradient across the membrane. The V-type alpha chain is a catalytic subunit. The chain is V-type ATP synthase alpha chain from Anaeromyxobacter dehalogenans (strain 2CP-C).